The primary structure comprises 623 residues: DNA-directed RNA polymerase subunit beta' (623 aa).

Cysteine 70, cysteine 72, cysteine 85, and cysteine 88 together coordinate Zn(2+). Positions 466, 468, and 470 each coordinate Mg(2+).

The protein belongs to the RNA polymerase beta' chain family. RpoC1 subfamily. As to quaternary structure, in plastids the minimal PEP RNA polymerase catalytic core is composed of four subunits: alpha, beta, beta', and beta''. When a (nuclear-encoded) sigma factor is associated with the core the holoenzyme is formed, which can initiate transcription. It depends on Mg(2+) as a cofactor. Zn(2+) serves as cofactor.

It is found in the plastid. Its subcellular location is the chloroplast. It carries out the reaction RNA(n) + a ribonucleoside 5'-triphosphate = RNA(n+1) + diphosphate. DNA-dependent RNA polymerase catalyzes the transcription of DNA into RNA using the four ribonucleoside triphosphates as substrates. The polypeptide is DNA-directed RNA polymerase subunit beta' (Rhodomonas salina (Cryptomonas salina)).